A 162-amino-acid polypeptide reads, in one-letter code: Phosphopantetheine adenylyltransferase (162 aa).

T10 lines the substrate pocket. Residues 10-11 (TF) and H18 contribute to the ATP site. K42, L74, and R88 together coordinate substrate. ATP-binding positions include 89–91 (GLR), E99, and 124–130 (YAFLSSS).

The protein belongs to the bacterial CoaD family. Homohexamer. Mg(2+) is required as a cofactor.

Its subcellular location is the cytoplasm. The catalysed reaction is (R)-4'-phosphopantetheine + ATP + H(+) = 3'-dephospho-CoA + diphosphate. Its pathway is cofactor biosynthesis; coenzyme A biosynthesis; CoA from (R)-pantothenate: step 4/5. In terms of biological role, reversibly transfers an adenylyl group from ATP to 4'-phosphopantetheine, yielding dephospho-CoA (dPCoA) and pyrophosphate. The polypeptide is Phosphopantetheine adenylyltransferase (Methylococcus capsulatus (strain ATCC 33009 / NCIMB 11132 / Bath)).